Here is a 375-residue protein sequence, read N- to C-terminus: Nucleosome assembly protein 1-like 4 (375 aa).

The interval 1 to 28 is disordered; sequence MAENSLSDGGPADSVEAAKNASNTEKLT. N-acetylalanine is present on Ala-2. A phosphoserine mark is found at Ser-5, Ser-7, and Ser-49. Residue Thr-51 is modified to Phosphothreonine. 2 positions are modified to phosphoserine: Ser-53 and Ser-54. Position 58 is a phosphothreonine (Thr-58). Residue Lys-105 is modified to N6-acetyllysine. Ser-125 carries the phosphoserine modification. Lys-146 carries the post-translational modification N6-acetyllysine. A Nuclear localization signal motif is present at residues 265 to 271; it reads IKKKQKH. Phosphoserine is present on Ser-304. The interval 339–375 is disordered; that stretch reads AIEDDDNFEEGEEGEEEELEGDEEGEDEDDADVNPKV.

This sequence belongs to the nucleosome assembly protein (NAP) family. As to quaternary structure, interacts with core (H2A, H2B, H3, H4) and linker (H1) histones. Polyglutamylated and polyglycylated. These 2 modifications occur exclusively on glutamate residues and result in either polyglutamate or polyglycine chains on the gamma-carboxyl group. Both modifications can coexist on the same protein on adjacent residues, and lowering polyglycylation levels increases polyglutamylation, and reciprocally. Polyglutamylated by TTLL4. In terms of processing, phosphorylated at the G0/G1 boundary but it is not phosphorylated in S-phase. Phosphorylated protein remains in the cytoplasm in a complex with histones during the G0/G1 transition, whereas dephosphorylation triggers its transport into the nucleus at the G1/S-boundary.

The protein resides in the nucleus. The protein localises to the cytoplasm. Functionally, acts as a histone chaperone in nucleosome assembly. In condensing spermatids, mediates the loading of the heterodimer composed of histones H2AB1 and H2BC1/TH2B onto the nucleosomes, thereby promoting the replacement of histones to protamine in male germ cells. The chain is Nucleosome assembly protein 1-like 4 (Nap1l4) from Mus musculus (Mouse).